We begin with the raw amino-acid sequence, 718 residues long: Putative methyltransferase NSUN7 (718 aa).

The Nucleophile role is filled by Cys-439. Disordered regions lie at residues 536 to 557 (GKSS…KGAT), 578 to 616 (ANLS…PAVP), and 694 to 718 (SLSR…RRWL). The span at 538–549 (SSKREKKKKKSK) shows a compositional bias: basic residues. The segment covering 591–604 (QKNTAQVGASSQTR) has biased composition (polar residues). Basic and acidic residues predominate over residues 696-706 (SRKEEKPKDDT).

Belongs to the class I-like SAM-binding methyltransferase superfamily. RsmB/NOP family.

In terms of biological role, may have S-adenosyl-L-methionine-dependent methyl-transferase activity. The chain is Putative methyltransferase NSUN7 (NSUN7) from Homo sapiens (Human).